A 121-amino-acid chain; its full sequence is Large ribosomal subunit protein bL12 (121 aa).

It belongs to the bacterial ribosomal protein bL12 family. As to quaternary structure, homodimer. Part of the ribosomal stalk of the 50S ribosomal subunit. Forms a multimeric L10(L12)X complex, where L10 forms an elongated spine to which 2 to 4 L12 dimers bind in a sequential fashion. Binds GTP-bound translation factors.

In terms of biological role, forms part of the ribosomal stalk which helps the ribosome interact with GTP-bound translation factors. Is thus essential for accurate translation. This Baumannia cicadellinicola subsp. Homalodisca coagulata protein is Large ribosomal subunit protein bL12.